The primary structure comprises 200 residues: Large ribosomal subunit protein uL22c (200 aa).

It belongs to the universal ribosomal protein uL22 family. Part of the 50S ribosomal subunit.

It localises to the plastid. Its subcellular location is the chloroplast. Functionally, this protein binds specifically to 23S rRNA. The globular domain of the protein is located near the polypeptide exit tunnel on the outside of the subunit, while an extended beta-hairpin is found that lines the wall of the exit tunnel in the center of the 70S ribosome. The chain is Large ribosomal subunit protein uL22c (rpl22) from Medicago sativa (Alfalfa).